The chain runs to 499 residues: Eukaryotic peptide chain release factor GTP-binding subunit ERF3A (499 aa).

Positions 1–69 (MELSEPIVEN…PKSVVAPPGA (69 aa)) are disordered. The span at 41 to 50 (RPPEESAHEM) shows a compositional bias: basic and acidic residues. The tr-type G domain maps to 72–298 (KEHVNVVFIG…DNLPNFNRSV (227 aa)). The segment at 81–88 (GHVDAGKS) is G1. A GTP-binding site is contributed by 84-89 (DAGKST). The interval 137–141 (GKTVE) is G2. A G3 region spans residues 158 to 161 (DAPG). GTP contacts are provided by residues 220 to 223 (NKMD) and 262 to 264 (SGL). The segment at 220–223 (NKMD) is G4. Positions 262 to 264 (SGL) are G5.

Belongs to the TRAFAC class translation factor GTPase superfamily. Classic translation factor GTPase family. ERF3 subfamily. Component of the eRF1-eRF3-GTP ternary complex, composed of ETF1/ERF1 and ERF3 (GSPT1/ERF3A or GSPT2/ERF3B) and GTP. Component of the transient SURF (SMG1-UPF1-eRF1-eRF3) complex. The ETF1-GSPT1 complex interacts with JMJD4. Interacts with PABPC1. Interacts with SHFL.

It carries out the reaction GTP + H2O = GDP + phosphate + H(+). GTPase component of the eRF1-eRF3-GTP ternary complex, a ternary complex that mediates translation termination in response to the termination codons UAA, UAG and UGA. GSPT1/ERF3A mediates ETF1/ERF1 delivery to stop codons: The eRF1-eRF3-GTP complex binds to a stop codon in the ribosomal A-site. GTP hydrolysis by GSPT1/ERF3A induces a conformational change that leads to its dissociation, permitting ETF1/ERF1 to accommodate fully in the A-site. Component of the transient SURF complex which recruits UPF1 to stalled ribosomes in the context of nonsense-mediated decay (NMD) of mRNAs containing premature stop codons. Required for SHFL-mediated translation termination which inhibits programmed ribosomal frameshifting (-1PRF) of mRNA from viruses and cellular genes. This Homo sapiens (Human) protein is Eukaryotic peptide chain release factor GTP-binding subunit ERF3A (GSPT1).